Reading from the N-terminus, the 221-residue chain is CASP-like protein 4B1 (221 aa).

The interval 1–78 (MAMQLHAASP…HDHHGGGGGG (78 aa)) is disordered. The Cytoplasmic portion of the chain corresponds to 1–87 (MAMQLHAASP…GDEATQLLNG (87 aa)). The segment covering 19–33 (SPPPPPPLSPHPEPA) has biased composition (pro residues). Positions 50–62 (APVATATTPLTPG) are enriched in low complexity. A helical membrane pass occupies residues 88 to 108 (IVLVLRAGAALLSFVAMALVA). The Extracellular portion of the chain corresponds to 109–125 (SCRHGDWMDFLRYQEYR). Residues 126–146 (YLLGVSVVAFVYSAAQALKNF) form a helical membrane-spanning segment. Topologically, residues 147-160 (RRRRRGAADASFLD) are cytoplasmic. The chain crosses the membrane as a helical span at residues 161 to 181 (FAGDQAVAYLLVTASAAALPI). The Extracellular segment spans residues 182 to 196 (TIRMRSAVVNVFTDA). Residues 197–217 (IAASIALGFLAFAALALSAML) form a helical membrane-spanning segment. The Cytoplasmic segment spans residues 218 to 221 (SRHA).

Belongs to the Casparian strip membrane proteins (CASP) family. Homodimer and heterodimers.

Its subcellular location is the cell membrane. The sequence is that of CASP-like protein 4B1 from Hordeum vulgare subsp. vulgare (Domesticated barley).